Reading from the N-terminus, the 327-residue chain is Glycoprotein integral membrane protein 1 (327 aa).

Positions 1 to 23 (MEGGLSAPLSVRLLLFIALPAAG) are cleaved as a signal peptide. Residues 24 to 259 (WLTTNAPRPP…LCRFWSSVVP (236 aa)) are Extracellular-facing. 3 N-linked (GlcNAc...) asparagine glycosylation sites follow: Asn-44, Asn-62, and Asn-146. Residues 260 to 280 (VLFMFLDVMVVGVLGAAGVIA) form a helical membrane-spanning segment. The Cytoplasmic segment spans residues 281–327 (VLKLLFPVCENKGILQVDKMNGISVPIILYPDGSEKTAQKLTDKTDI).

The protein localises to the membrane. This Mus musculus (Mouse) protein is Glycoprotein integral membrane protein 1 (Ginm1).